Consider the following 338-residue polypeptide: Serpentine receptor class alpha-31 (338 aa).

A run of 7 helical transmembrane segments spans residues 23–43 (GNHC…VFAI), 59–79 (LLFS…GIRI), 108–125 (LYYY…SLFF), 142–162 (FSKI…YWIF), 188–208 (VNEF…VIFF), 240–260 (VCII…TTEI), and 276–296 (SIAF…IIIY).

Belongs to the nematode receptor-like protein sra family.

It is found in the membrane. This is Serpentine receptor class alpha-31 (sra-31) from Caenorhabditis elegans.